A 237-amino-acid chain; its full sequence is Sugar fermentation stimulation protein homolog (237 aa).

The protein belongs to the SfsA family.

The protein is Sugar fermentation stimulation protein homolog of Colwellia psychrerythraea (strain 34H / ATCC BAA-681) (Vibrio psychroerythus).